The sequence spans 285 residues: N(G),N(G)-dimethylarginine dimethylaminohydrolase 1 (285 aa).

An N-acetylalanine modification is found at A2. L30 lines the substrate pocket. S33 is modified (phosphoserine). Substrate is bound by residues D73, E78, D79, R98, and R145. Residue H173 is the Proton donor of the active site. Residue C222 is modified to S-nitrosocysteine. Residue V268 coordinates substrate. An S-nitrosocysteine modification is found at C274. Catalysis depends on C274, which acts as the Nucleophile. C274 contacts Zn(2+).

This sequence belongs to the DDAH family. In terms of assembly, monomer. In terms of tissue distribution, detected in skeletal muscle, lung, heart, liver, kidney and brain (at protein level).

The catalysed reaction is N(omega),N(omega)-dimethyl-L-arginine + H2O = dimethylamine + L-citrulline. It catalyses the reaction N(omega)-methyl-L-arginine + H2O = L-citrulline + methylamine. Inhibited by zinc ions. In terms of biological role, hydrolyzes N(G),N(G)-dimethyl-L-arginine (ADMA) and N(G)-monomethyl-L-arginine (MMA) which act as inhibitors of NOS. Has therefore a role in the regulation of nitric oxide generation. The protein is N(G),N(G)-dimethylarginine dimethylaminohydrolase 1 (Ddah1) of Mus musculus (Mouse).